Reading from the N-terminus, the 161-residue chain is Allophycocyanin alpha chain (161 aa).

N71 is modified (N4-methylasparagine). C81 contacts (2R,3E)-phycocyanobilin.

Belongs to the phycobiliprotein family. As to quaternary structure, heterodimer of an alpha and a beta chain. Post-translationally, contains one covalently linked phycocyanobilin chromophore.

It is found in the plastid. The protein localises to the cyanelle thylakoid membrane. Its function is as follows. Light-harvesting photosynthetic bile pigment-protein from the phycobiliprotein complex. Allophycocyanin has a maximum absorption at approximately 650 nanometers. This Cyanophora paradoxa protein is Allophycocyanin alpha chain (apcA).